Consider the following 222-residue polypeptide: Eukaryotic translation initiation factor 3 subunit K (222 aa).

The region spanning Tyr46 to Lys208 is the PCI domain.

Belongs to the eIF-3 subunit K family. As to quaternary structure, component of the eukaryotic translation initiation factor 3 (eIF-3) complex. The eIF-3 complex interacts with pix.

It is found in the cytoplasm. Component of the eukaryotic translation initiation factor 3 (eIF-3) complex, which is involved in protein synthesis of a specialized repertoire of mRNAs and, together with other initiation factors, stimulates binding of mRNA and methionyl-tRNAi to the 40S ribosome. The eIF-3 complex specifically targets and initiates translation of a subset of mRNAs involved in cell proliferation. The polypeptide is Eukaryotic translation initiation factor 3 subunit K (Drosophila ananassae (Fruit fly)).